Consider the following 76-residue polypeptide: Repressor protein of division inhibition gene dicB (76 aa).

The DNA-binding element occupies 13–33 (KTKLAQAAGIRLASLYSWKGD).

In terms of biological role, this protein is a repressor of division inhibition gene dicB. This Escherichia coli (strain K12) protein is Repressor protein of division inhibition gene dicB (dicC).